Consider the following 622-residue polypeptide: MSTDNKQSLRAITLAAIGVVYGDIGTSPLYTLRECLSGQFGFGVERDAVFGFLSLIFWLLILVVSLKYLSFVMRADNAGEGGILTLMSLAGRNTSARMTSFLVIIGLIGGSFFYGEVVITPAISVLSAIEGLEIIAPQLDTWVVPLAIIVLTLLFAIQKHGTGLVGKLFAPIMLAWFLILAALGLRGIMGNPEVLQALNPIWAVHFFLEYKTVSFVALGAVVLSITGVEALYADMGHFGKLPIRLAWFTVVLPSLVLNYFGQGALLLKNPEAIKNPFFLLAPDWALVPMLIIATLATVIASQAVISGVFSLTRQAVRLGYLSPMRIIHTSEMESGQIYIPFINWLLYVAVVIVIVSFEHSSNLAAAYGIAVTGTMVLTSILSTTVAYRNWHWNKFLVALILVGLLCIDLPLFSANLDKIVSGGWLPLTLGLVMFIVMTTWKSERFRLLRRMHEHGNSLEAMIASLEKSPPVRVPGTAVYMSRAQKVIPFALMHNLKHNKVLHERVILLTLRTEDAPYVHNVRRVQIEQLSPTFWRVVASYGWRETPNVEEVFHRCGLEGLSCRMMETSFFMSHESLIVGKRPWYLRLRGKLYLILQRNALRAPDQFEIPPNRVIELGTQVEI.

The next 12 membrane-spanning stretches (helical) occupy residues 12–32 (ITLA…LYTL), 49–69 (VFGF…LKYL), 101–121 (FLVI…VITP), 134–154 (IIAP…LTLL), 163–183 (GLVG…LAAL), 213–233 (VSFV…ALYA), 247–267 (WFTV…ALLL), 276–296 (PFFL…ATLA), 337–357 (IYIP…IVSF), 363–383 (LAAA…ILST), 395–415 (FLVA…FSAN), and 419–439 (IVSG…VMTT).

This sequence belongs to the HAK/KUP transporter (TC 2.A.72) family.

The protein localises to the cell inner membrane. The catalysed reaction is K(+)(in) + H(+)(in) = K(+)(out) + H(+)(out). In terms of biological role, responsible for the low-affinity transport of potassium into the cell. Likely operates as a K(+):H(+) symporter. This Enterobacter sp. (strain 638) protein is Low affinity potassium transport system protein Kup.